The sequence spans 396 residues: MILHVDMDAFYASVEQRDRPELRGRPVVVGGSEGRGVVTAASYEAREYGIHSAMPGSRAIKLCPHADFVRGRLDHYASVGRAVREIFHRFTPVVQPLSLDEAFLDVSGTIRLHGSPREIGINIRETIRRELDLPASVGIAPLKFVAKIASDIGKPNGFVEVPADGVREFLDPLPVSRLWGVGKVGQTKLQRLGYRTIADLRVKDLDALKSQLGRWGEHLWNLANGIDRRQVVVDHLAKGIGHERTFAEDLSDIESLNAVVSYLSEQTARRLRRARRLASTITLKYRREDFQTFSRARKLSTPTDSTLEILQVAEELLLEMRSREPRSVRLLGISLGGLTDADAPKQLHLFGEETGENASSKVDTLSDQIATKLGKHSLYRASSHQWVDRKNTKPKN.

The UmuC domain occupies 2–182 (ILHVDMDAFY…LPVSRLWGVG (181 aa)). Positions 6 and 100 each coordinate Mg(2+). Glu101 is a catalytic residue.

It belongs to the DNA polymerase type-Y family. As to quaternary structure, monomer. Mg(2+) serves as cofactor.

Its subcellular location is the cytoplasm. The catalysed reaction is DNA(n) + a 2'-deoxyribonucleoside 5'-triphosphate = DNA(n+1) + diphosphate. Functionally, poorly processive, error-prone DNA polymerase involved in untargeted mutagenesis. Copies undamaged DNA at stalled replication forks, which arise in vivo from mismatched or misaligned primer ends. These misaligned primers can be extended by PolIV. Exhibits no 3'-5' exonuclease (proofreading) activity. May be involved in translesional synthesis, in conjunction with the beta clamp from PolIII. This Rhodopirellula baltica (strain DSM 10527 / NCIMB 13988 / SH1) protein is DNA polymerase IV.